Consider the following 387-residue polypeptide: Major outer membrane protein P.IA (387 aa).

The first 19 residues, 1–19 (MRKKLTALVLSALPLAAVA), serve as a signal peptide directing secretion.

It belongs to the Gram-negative porin family. In terms of assembly, homotrimer.

It is found in the cell outer membrane. Serves as a slightly cation selective porin. Major antigen on the gonococcal cell surface and it may have pathogenic properties in addition to its porin activity. The sequence is that of Major outer membrane protein P.IA (porA) from Neisseria meningitidis serogroup C.